The sequence spans 367 residues: Leucine-rich repeat-containing protein 28 (367 aa).

LRR repeat units lie at residues 16–36 (KHKN…ELLK), 42–63 (YLER…LAQK), 66–87 (NLVE…IGSL), 89–111 (KLQS…GRLK), 112–133 (SLRH…IGKL), 135–156 (ELQT…LYQC), 158–179 (SLQY…LCQL), 181–202 (SLNE…LGRS), and 204–226 (ELQY…LYNK).

In Xenopus tropicalis (Western clawed frog), this protein is Leucine-rich repeat-containing protein 28 (lrrc28).